A 207-amino-acid polypeptide reads, in one-letter code: Guanylate kinase (207 aa).

One can recognise a Guanylate kinase-like domain in the interval 4–184; the sequence is GTLYIVSAPS…ALMDFKAILR (181 aa). 11–18 is an ATP binding site; it reads APSGAGKS.

This sequence belongs to the guanylate kinase family.

It localises to the cytoplasm. The catalysed reaction is GMP + ATP = GDP + ADP. Essential for recycling GMP and indirectly, cGMP. This chain is Guanylate kinase, found in Vibrio parahaemolyticus serotype O3:K6 (strain RIMD 2210633).